Here is a 201-residue protein sequence, read N- to C-terminus: Recombination protein RecR (201 aa).

The C4-type zinc finger occupies 57 to 72; that stretch reads CADCRTFTEQDVCNIC. In terms of domain architecture, Toprim spans 81-176; the sequence is GQICVVESPA…EASRIAHGVP (96 aa).

The protein belongs to the RecR family.

In terms of biological role, may play a role in DNA repair. It seems to be involved in an RecBC-independent recombinational process of DNA repair. It may act with RecF and RecO. The sequence is that of Recombination protein RecR from Salmonella choleraesuis (strain SC-B67).